The following is a 342-amino-acid chain: Protein BASIC PENTACYSTEINE6 (342 aa).

The stretch at alanine 41–aspartate 67 forms a coiled coil. The alanine-zipper stretch occupies residues alanine 41–alanine 76. The disordered stretch occupies residues arginine 143–aspartate 199. Residues alanine 164 to lysine 195 form a required for nucleus and nucleolus localization region. Residues arginine 185 to lysine 194 are compositionally biased toward basic residues. Positions lysine 192–lysine 195 match the Nuclear localization signal motif.

It belongs to the BBR/BPC family. In terms of assembly, homodimer. Heterodimer with BPC4. Expressed in seedlings, leaves and pistils. Detected in the base of flowers and tips of carpels, in sepal vasculature, in young rosette, in the lateral and tip of primary roots, and in ovule at the exception of the outer integument.

Its subcellular location is the nucleus. The protein resides in the nucleolus. Its function is as follows. Transcriptional regulator that specifically binds to GA-rich elements (GAGA-repeats) present in regulatory sequences of genes involved in developmental processes. The sequence is that of Protein BASIC PENTACYSTEINE6 (BPC6) from Arabidopsis thaliana (Mouse-ear cress).